A 461-amino-acid polypeptide reads, in one-letter code: Argininosuccinate lyase (461 aa).

The protein belongs to the lyase 1 family. Argininosuccinate lyase subfamily. Homotetramer.

The protein localises to the cytoplasm. It catalyses the reaction 2-(N(omega)-L-arginino)succinate = fumarate + L-arginine. Its pathway is amino-acid biosynthesis; L-arginine biosynthesis; L-arginine from L-ornithine and carbamoyl phosphate: step 3/3. This is Argininosuccinate lyase from Nostoc punctiforme (strain ATCC 29133 / PCC 73102).